The following is a 489-amino-acid chain: Argininosuccinate lyase (489 aa).

The segment at 1 to 20 is disordered; the sequence is MSEPSAAVGQRPGGESAPAH.

The protein belongs to the lyase 1 family. Argininosuccinate lyase subfamily.

It localises to the cytoplasm. It catalyses the reaction 2-(N(omega)-L-arginino)succinate = fumarate + L-arginine. The protein operates within amino-acid biosynthesis; L-arginine biosynthesis; L-arginine from L-ornithine and carbamoyl phosphate: step 3/3. This Acidothermus cellulolyticus (strain ATCC 43068 / DSM 8971 / 11B) protein is Argininosuccinate lyase.